Reading from the N-terminus, the 114-residue chain is Chaperone protein YscY (114 aa).

As to quaternary structure, binds to YscX.

Its subcellular location is the cytoplasm. Required for Yop secretion. Functions probably as a chaperone which stabilizes YscX within the cell, before its secretion. In Yersinia enterocolitica, this protein is Chaperone protein YscY (yscY).